A 1077-amino-acid chain; its full sequence is Adenylate cyclase type 4 (1077 aa).

The Cytoplasmic portion of the chain corresponds to 1 to 28; the sequence is MARLFSPRPPPSEDLFYETYYSLSQQYP. Transmembrane regions (helical) follow at residues 29–50, 61–80, 94–117, 120–138, 141–162, and 170–190; these read LLLL…VAWA, FLTT…GLAS, GLVW…VSAW, VSYF…PLGM, AAVA…YLGP, and LLPQ…AGVY. Residues 191–585 lie on the Cytoplasmic side of the membrane; sequence HKALMERALR…YRLSAIPAFK (395 aa). Residues aspartate 278, isoleucine 279, and aspartate 322 each contribute to the Mg(2+) site. ATP is bound by residues 278–283, 320–322, and arginine 366; these read DIVGFT and LGD. At serine 520 the chain carries Phosphoserine. Threonine 536 carries the post-translational modification Phosphothreonine. Helical transmembrane passes span 586–607, 611–633, and 664–687; these read YYEA…LVTN, ALAI…CFSE, and IALG…FFPT. Residues 688–714 are Extracellular-facing; sequence SSDCPFQAPNVSSMISNLSWELPGSLP. 2 N-linked (GlcNAc...) asparagine glycosylation sites follow: asparagine 697 and asparagine 704. Transmembrane regions (helical) follow at residues 715-736, 744-764, and 791-807; these read LISV…SLFL, LLLL…SHAW, and MGAI…LVLA. Over 808 to 1077 the chain is Cytoplasmic; that stretch reads RQNEYYCRLD…RTGPPSATLG (270 aa). Residues lysine 925, 1005–1007, 1012–1016, and lysine 1052 each bind ATP; these read DIW and NVASR.

The protein belongs to the adenylyl cyclase class-4/guanylyl cyclase family. The cofactor is Mg(2+). Requires Mn(2+) as cofactor. As to expression, detected in the zona glomerulosa and the zona fasciculata in the adrenal gland (at protein level).

It localises to the cell membrane. It is found in the cytoplasm. The enzyme catalyses ATP = 3',5'-cyclic AMP + diphosphate. With respect to regulation, activated by forskolin. Insensitive to calcium/calmodulin. Stimulated by GNAS and by the G-protein beta and gamma subunit complex. In terms of biological role, catalyzes the formation of the signaling molecule cAMP in response to G-protein signaling. The polypeptide is Adenylate cyclase type 4 (ADCY4) (Homo sapiens (Human)).